Reading from the N-terminus, the 544-residue chain is Chromatin assembly factor 1 subunit A (544 aa).

A compositionally biased stretch (polar residues) spans 1 to 22 (MNSESVDSDVAASTSNKGNELC). 3 disordered regions span residues 1–52 (MNSE…EADE), 67–117 (IYNG…REQE), and 138–160 (QEQQ…AQRL). A compositionally biased stretch (low complexity) spans 23–35 (SSSTDITSLSVSS). Residues 36-47 (PNESVIHSSHSA) are compositionally biased toward polar residues. Residues 56-170 (KLSYEGNRKK…RQEQILNKER (115 aa)) form an interaction with DNA and pcn1/PCNA region. Positions 74–117 (AGKEKKLQKQRAQEERIRQKEAERLKREKERQQREQEKKLREQE) are enriched in basic and acidic residues. A coiled-coil region spans residues 76 to 176 (KEKKLQKQRA…NKERQQLKLN (101 aa)). Residues 172-179 (QLKLNNFF) carry the PCNA-interaction protein (PIP box) motif. Residues 325–396 (SNVLLNPWLE…DKDSVNASNT (72 aa)) form an interaction with histones H3/H4 region. The segment covering 351–388 (DEEDDGEDLESEDEEVDNSDDIVEDGDNAFVDDEDDDK) has biased composition (acidic residues). The interval 351–400 (DEEDDGEDLESEDEEVDNSDDIVEDGDNAFVDDEDDDKDSVNASNTHRSS) is disordered.

The protein belongs to the RLF2 family. In terms of assembly, component of chromatin assembly factor 1 (CAF-1), composed of pcf1, pcf2 and pcf3. Interacts (via PIP motif) with pcn1/PCNA; the interaction is direct and occurs during S-phase. Interacts with swi6 at the G1/S-phase transition and early S-phase, but not in the G2 phase. The CAF-1 complex interacts with histone H3/H4 dimers.

It localises to the nucleus. Functionally, acts as a component of the histone chaperone complex chromatin assembly factor 1 (CAF-1), which assembles histone octamers onto DNA during replication and repair. CAF-1 performs the first step of the nucleosome assembly process, bringing newly synthesized histones H3 and H4 to replicating DNA; histones H2A/H2B can bind to this chromatin precursor subsequent to DNA replication to complete the histone octamer. Plays a role in the maintenance of heterochromatin. This Schizosaccharomyces pombe (strain 972 / ATCC 24843) (Fission yeast) protein is Chromatin assembly factor 1 subunit A.